A 326-amino-acid polypeptide reads, in one-letter code: Mitochondrial substrate carrier family protein R (326 aa).

Solcar repeat units follow at residues 9–95 (TSPM…LKNN), 101–214 (KSSV…FKRI), and 226–318 (VIGI…LCDY). 6 helical membrane passes run 12-32 (MVTL…IAPL), 64-84 (LAGL…YSAI), 104-124 (VQIF…TYPL), 185-205 (GIWR…GVGY), 226-246 (VIGI…QTAA), and 290-310 (LFKG…VAFL).

It belongs to the mitochondrial carrier (TC 2.A.29) family.

Its subcellular location is the mitochondrion inner membrane. Mitochondrial solute carriers shuttle metabolites, nucleotides, and cofactors through the mitochondrial inner membrane. May be involved in the accumulation of coenzyme A in the mitochondrial matrix. This Dictyostelium discoideum (Social amoeba) protein is Mitochondrial substrate carrier family protein R (mcfR).